A 294-amino-acid polypeptide reads, in one-letter code: Protein RarD (294 aa).

Residues 1–11 (MDAKQTRQGVL) lie on the Cytoplasmic side of the membrane. A helical transmembrane segment spans residues 12–34 (LALAAYFIWGIAPAYFKLIYYVP). Residues 18 to 145 (FIWGIAPAYF…AVCGVLVQLW (128 aa)) enclose the EamA domain. Over 35–37 (ADE) the chain is Periplasmic. The chain crosses the membrane as a helical span at residues 38–60 (ILTHRVIWSFFFMVALLSVSRQW). Residues 61-72 (RQVKRLLKTPKK) are Cytoplasmic-facing. Residues 73–95 (IFLLALSAVLVGGNWLLFIWAVN) traverse the membrane as a helical segment. At 96 to 99 (NHHM) the chain is on the periplasmic side. Residues 100–122 (LEASLGYFINPLVNILLGMIFLG) form a helical membrane-spanning segment. The Cytoplasmic segment spans residues 123 to 128 (ERFRRM). A helical transmembrane segment spans residues 129–146 (QWLAVILAVCGVLVQLWT). Over 147–149 (FGS) the chain is Periplasmic. The chain crosses the membrane as a helical span at residues 150–167 (LPIIALGLAFSFAFYGLV). Topologically, residues 168 to 179 (RKKIAVEAQTGM) are cytoplasmic. The chain crosses the membrane as a helical span at residues 180 to 197 (LVETLWLLPVAAIYLFSI). At 198–211 (ADSATSHMGQNALS) the chain is on the periplasmic side. The helical transmembrane segment at 212 to 234 (LNLLLMAAGVVTTIPLLCFTGAA) threads the bilayer. Residues 235–238 (TRLR) lie on the Cytoplasmic side of the membrane. Residues 239–261 (LSTLGFFQYIGPTLMFLLAVTFY) traverse the membrane as a helical segment. Over 262–270 (GEVPGADKM) the chain is Periplasmic. The helical transmembrane segment at 271–290 (VTFAFIWVALAIFVMDAIYT) threads the bilayer. The Cytoplasmic portion of the chain corresponds to 291–294 (QRKK).

The protein belongs to the EamA transporter family.

Its subcellular location is the cell inner membrane. This Salmonella typhi protein is Protein RarD (rarD).